A 463-amino-acid chain; its full sequence is MHLHFTPRQIVEKLDQYIIGQKDAKKAVAVALRNRYRRSKLAENLRDEIAPKNILMIGPTGVGKTEVARRMAKLVGAPFIKVEATKFTEVGYVGRDVESMVRDLVETSVRIVKEEMVVKVQDKAEEQANQRLVEILVPSPEKQSGFKNPLEMLFGGAQNSNQTSDTQEDVEIEKKRQDVERKLAAGLLEEEIVSIEVTEQQSSMFDMLQGTGMEQMGMNFQDALGSFMPKKTKKRKLSVKEARKLLSNEEAQRLIDMDEVTQEAVYRAEQLGIIFIDEIDKIAGKQSNSVDVSREGVQRDILPIVEGSNVATKYGSVKTDYILFVAAGAFHMSKPSDLIPELQGRFPIRVELTKLSTDDFVKILIEPDNALIKQYMALLATEGIEIEFSDEAIRKIAEIAYQVNQDTDNIGARRLHTIMEKLLEDLSFEASEITLEKITITPQYVEEKLATIAKNKDVSQFIL.

Residues I19, G61 to E66, D277, E341, and R413 contribute to the ATP site.

Belongs to the ClpX chaperone family. HslU subfamily. As to quaternary structure, a double ring-shaped homohexamer of HslV is capped on each side by a ring-shaped HslU homohexamer. The assembly of the HslU/HslV complex is dependent on binding of ATP.

Its subcellular location is the cytoplasm. Its function is as follows. ATPase subunit of a proteasome-like degradation complex; this subunit has chaperone activity. The binding of ATP and its subsequent hydrolysis by HslU are essential for unfolding of protein substrates subsequently hydrolyzed by HslV. HslU recognizes the N-terminal part of its protein substrates and unfolds these before they are guided to HslV for hydrolysis. The chain is ATP-dependent protease ATPase subunit HslU from Bacillus cereus (strain ATCC 14579 / DSM 31 / CCUG 7414 / JCM 2152 / NBRC 15305 / NCIMB 9373 / NCTC 2599 / NRRL B-3711).